Reading from the N-terminus, the 285-residue chain is tRNA (cytidine(32)/guanosine(34)-2'-O)-methyltransferase (285 aa).

Residues glycine 53, tryptophan 55, aspartate 83, aspartate 99, and aspartate 124 each coordinate S-adenosyl-L-methionine. Lysine 164 functions as the Proton acceptor in the catalytic mechanism.

It belongs to the class I-like SAM-binding methyltransferase superfamily. RNA methyltransferase RlmE family. TRM7 subfamily.

It is found in the cytoplasm. The catalysed reaction is cytidine(32)/guanosine(34) in tRNA + 2 S-adenosyl-L-methionine = 2'-O-methylcytidine(32)/2'-O-methylguanosine(34) in tRNA + 2 S-adenosyl-L-homocysteine + 2 H(+). Its function is as follows. Methylates the 2'-O-ribose of nucleotides at positions 32 and 34 of the tRNA anticodon loop of substrate tRNAs. Requires trm732 for methylation of the cytidine at position 32 of the anticodon loop of substrate tRNAs. Requires trm734 for methylation of the nucleotide at position 34 of the anticodon loop of substrate tRNAs. Methylates tRNA(Phe). In Schizosaccharomyces pombe (strain 972 / ATCC 24843) (Fission yeast), this protein is tRNA (cytidine(32)/guanosine(34)-2'-O)-methyltransferase.